The sequence spans 857 residues: Leucine--tRNA ligase (857 aa).

Positions 42 to 52 match the 'HIGH' region motif; the sequence is PYPSGRLHMGH. Positions 617–621 match the 'KMSKS' region motif; that stretch reads KMSKS. ATP is bound at residue Lys-620.

It belongs to the class-I aminoacyl-tRNA synthetase family.

Its subcellular location is the cytoplasm. It carries out the reaction tRNA(Leu) + L-leucine + ATP = L-leucyl-tRNA(Leu) + AMP + diphosphate. The polypeptide is Leucine--tRNA ligase (Vibrio vulnificus (strain CMCP6)).